Reading from the N-terminus, the 404-residue chain is Cytoplasmic tRNA 2-thiolation protein 2 (404 aa).

The protein belongs to the CTU2/NCS2 family.

It localises to the cytoplasm. Its pathway is tRNA modification; 5-methoxycarbonylmethyl-2-thiouridine-tRNA biosynthesis. In terms of biological role, plays a central role in 2-thiolation of mcm(5)S(2)U at tRNA wobble positions of tRNA(Lys), tRNA(Glu) and tRNA(Gln). May act by forming a heterodimer with NCS6/CTU1 that ligates sulfur from thiocarboxylated URM1 onto the uridine of tRNAs at wobble position. The polypeptide is Cytoplasmic tRNA 2-thiolation protein 2 (Drosophila erecta (Fruit fly)).